Reading from the N-terminus, the 206-residue chain is FMN-dependent NADH:quinone oxidoreductase 1 (206 aa).

FMN-binding positions include Ser-9, 15–17 (SVS), and 139–142 (SRGG).

Belongs to the azoreductase type 1 family. Homodimer. The cofactor is FMN.

The catalysed reaction is 2 a quinone + NADH + H(+) = 2 a 1,4-benzosemiquinone + NAD(+). The enzyme catalyses N,N-dimethyl-1,4-phenylenediamine + anthranilate + 2 NAD(+) = 2-(4-dimethylaminophenyl)diazenylbenzoate + 2 NADH + 2 H(+). Its function is as follows. Quinone reductase that provides resistance to thiol-specific stress caused by electrophilic quinones. Functionally, also exhibits azoreductase activity. Catalyzes the reductive cleavage of the azo bond in aromatic azo compounds to the corresponding amines. This Cupriavidus pinatubonensis (strain JMP 134 / LMG 1197) (Cupriavidus necator (strain JMP 134)) protein is FMN-dependent NADH:quinone oxidoreductase 1.